The primary structure comprises 78 residues: Probable two-component-system connector protein YcgZ (78 aa).

Its function is as follows. Probably a connector protein for RcsB/C regulation of biofilm formation, providing additional signal input into the two-component signaling pathway. Partially antagonizes the activities of YmgA and AriR, proteins that, via the Rcs phosphorelay, promote the synthesis of colanic acid, an exopolysaccharide and matrix component. This is Probable two-component-system connector protein YcgZ (ycgZ) from Escherichia coli (strain K12).